Consider the following 404-residue polypeptide: Argininosuccinate synthase (404 aa).

ATP contacts are provided by residues 12–20 (AYSGGLDTS) and Ala39. Residues Tyr90 and Ser95 each contribute to the L-citrulline site. Position 120 (Gly120) interacts with ATP. The L-aspartate site is built by Thr122, Asn126, and Asp127. An L-citrulline-binding site is contributed by Asn126. The L-citrulline site is built by Arg130, Ser181, Ser190, Glu266, and Tyr278.

It belongs to the argininosuccinate synthase family. Type 1 subfamily. As to quaternary structure, homotetramer.

The protein localises to the cytoplasm. It carries out the reaction L-citrulline + L-aspartate + ATP = 2-(N(omega)-L-arginino)succinate + AMP + diphosphate + H(+). It participates in amino-acid biosynthesis; L-arginine biosynthesis; L-arginine from L-ornithine and carbamoyl phosphate: step 2/3. This Rhodospirillum rubrum (strain ATCC 11170 / ATH 1.1.1 / DSM 467 / LMG 4362 / NCIMB 8255 / S1) protein is Argininosuccinate synthase.